Consider the following 337-residue polypeptide: NADH-quinone oxidoreductase subunit H (337 aa).

The next 8 membrane-spanning stretches (helical) occupy residues 13–33 (IIIVLQCLAIILPMLGAIAYL), 82–102 (AVFIIAPLMTFILALIAWAVI), 115–135 (VGVLYLFAVSGLGVYGIIMAG), 154–174 (MVSYEVAMGLIIIAVILSAGS), 187–207 (GVWYFIPHFPMFVMFLVSILA), 248–268 (ILMSGITAILFLGGWLPPVDI), 274–294 (IPGIIWFFLKIALILFVFLWV), and 313–333 (VFLPGSLIWVVLTAGFLVTFD).

This sequence belongs to the complex I subunit 1 family. As to quaternary structure, NDH-1 is composed of 14 different subunits. Subunits NuoA, H, J, K, L, M, N constitute the membrane sector of the complex.

Its subcellular location is the cell inner membrane. The enzyme catalyses a quinone + NADH + 5 H(+)(in) = a quinol + NAD(+) + 4 H(+)(out). Its function is as follows. NDH-1 shuttles electrons from NADH, via FMN and iron-sulfur (Fe-S) centers, to quinones in the respiratory chain. The immediate electron acceptor for the enzyme in this species is believed to be ubiquinone. Couples the redox reaction to proton translocation (for every two electrons transferred, four hydrogen ions are translocated across the cytoplasmic membrane), and thus conserves the redox energy in a proton gradient. This subunit may bind ubiquinone. The protein is NADH-quinone oxidoreductase subunit H of Rhodospirillum rubrum (strain ATCC 11170 / ATH 1.1.1 / DSM 467 / LMG 4362 / NCIMB 8255 / S1).